Here is a 707-residue protein sequence, read N- to C-terminus: Phosphoprotein (707 aa).

An N0 binding region spans residues 1–35; the sequence is MDKLDLVNDGLDIIDFIQKNQKEIQKTYGRSSIQQ. Disordered regions lie at residues 26–103, 193–229, 254–446, and 454–473; these read KTYG…EDPD, FVPK…PRGN, FAKS…AENV, and VTRN…SLDD. 2 stretches are compositionally biased toward polar residues: residues 28–37 and 77–96; these read YGRSSIQQPS and DLSS…SNTR. Ser-257 carries the post-translational modification Phosphoserine; by host. Basic and acidic residues predominate over residues 296–317; sequence FPEKEETPDVRRKDSLMQDSCK. Phosphoserine; by host is present on Ser-350. Residues 435–446 are compositionally biased toward polar residues; that stretch reads NQESKSVTAENV. The tract at residues 473–578 is multimerization; that stretch reads DKYIMPSDDF…LVSMMIMIPG (106 aa).

As to quaternary structure, homotetramer. Interacts (via multimerization domain) with polymerase L; this interaction forms the polymerase L-P complex. Interacts (via N-terminus) with N0 (via Ncore); this interaction allows P to chaperon N0 to avoid N polymerization before encapsidation. Interacts (via C-terminus) with N-RNA template; this interaction positions the polymerase on the template for both transcription and replication.

Its function is as follows. Essential cofactor of the RNA polymerase L that plays a central role in the transcription and replication by forming the polymerase complex with RNA polymerase L and recruiting L to the genomic N-RNA template for RNA synthesis. Also plays a central role in the encapsidation of nascent RNA chains by forming the encapsidation complex with the nucleocapsid protein N (N-P complex). Acts as a chaperone for newly synthesized free N protein, so-called N0, allowing encapsidation of nascent RNA chains during replication. The nucleoprotein protein N prevents excessive phosphorylation of P, which leads to down-regulation of viral transcription/ replication. Participates, together with N, in the formation of viral factories (viroplasms), which are large inclusions in the host cytoplasm where replication takes place. The chain is Phosphoprotein (P/V/C) from Equus caballus (Horse).